A 102-amino-acid chain; its full sequence is Small ribosomal subunit protein uS10 (102 aa).

This sequence belongs to the universal ribosomal protein uS10 family. In terms of assembly, part of the 30S ribosomal subunit.

Its function is as follows. Involved in the binding of tRNA to the ribosomes. In Lactobacillus gasseri (strain ATCC 33323 / DSM 20243 / BCRC 14619 / CIP 102991 / JCM 1131 / KCTC 3163 / NCIMB 11718 / NCTC 13722 / AM63), this protein is Small ribosomal subunit protein uS10.